We begin with the raw amino-acid sequence, 156 residues long: Bursicon (156 aa).

Residues 1–26 form the signal peptide; the sequence is MYALDFLFIAFVYFAACHIQEKPVRA. Intrachain disulfides connect Cys37–Cys86, Cys51–Cys100, Cys61–Cys121, Cys65–Cys123, and Cys83–Cys126. The 91-residue stretch at 37-127 folds into the CTCK domain; it reads CQMTPVIHIL…PLECMCRPCG (91 aa).

As to quaternary structure, heterodimer of burs and pburs.

Its subcellular location is the secreted. Final heterodimeric neurohormone released at the end of the molting cycle, involved in the sclerotization (tanning) of the insect cuticle, melanization and wing spreading. The chain is Bursicon from Manduca sexta (Tobacco hawkmoth).